Reading from the N-terminus, the 505-residue chain is Serine carboxypeptidase-like 47 (505 aa).

Positions 1 to 22 are cleaved as a signal peptide; sequence MEAKTFFLFMLFIFSQSWLSTS. N-linked (GlcNAc...) asparagine glycosylation is found at Asn-37, Asn-86, and Asn-122. 3 cysteine pairs are disulfide-bonded: Cys-138/Cys-378, Cys-306/Cys-321, and Cys-344/Cys-349. Residue Ser-228 is part of the active site. N-linked (GlcNAc...) asparagine glycosylation is present at Asn-301. Residue Asp-416 is part of the active site. N-linked (GlcNAc...) asparagine glycans are attached at residues Asn-432 and Asn-444. Residue His-473 is part of the active site.

The protein belongs to the peptidase S10 family. As to expression, expressed in roots, flowers and siliques.

The protein resides in the secreted. Probable carboxypeptidase. This chain is Serine carboxypeptidase-like 47 (SCPL47), found in Arabidopsis thaliana (Mouse-ear cress).